We begin with the raw amino-acid sequence, 556 residues long: Energy-dependent translational throttle protein EttA (556 aa).

ABC transporter domains are found at residues Tyr7–Gln260 and Ile325–Tyr551. Gly40–Ser47 lines the ATP pocket. The tract at residues Ser96–Asn140 is arm. The tract at residues Gly243–Lys323 is ptIM. Gly357 to Ser364 contributes to the ATP binding site.

The protein belongs to the ABC transporter superfamily. ABCF family. Translational throttle EttA subfamily. In terms of assembly, monomer. Probably contacts ribosomal proteins L1, L5, L33 and S7, the 16S and 23S rRNA and the P-site containing tRNA(fMet).

Its subcellular location is the cytoplasm. The enzyme catalyses ATP + H2O = ADP + phosphate + H(+). A translation factor that gates the progression of the 70S ribosomal initiation complex (IC, containing tRNA(fMet) in the P-site) into the translation elongation cycle by using a mechanism sensitive to the ATP/ADP ratio. Binds to the 70S ribosome E-site where it modulates the state of the translating ribosome during subunit translocation. ATP hydrolysis probably frees it from the ribosome, which can enter the elongation phase. This Haemophilus influenzae (strain ATCC 51907 / DSM 11121 / KW20 / Rd) protein is Energy-dependent translational throttle protein EttA.